The sequence spans 520 residues: Probable kinase 098L (520 aa).

The Protein kinase domain occupies 82–393 (LTSVQSFGSK…NSPLLKKGFV (312 aa)). ATP-binding positions include 88–96 (FGSKSKQGI) and Lys-111. Asp-205 acts as the Proton acceptor in catalysis. Positions 416-442 (QTAQLIETDKEILDNLIDDLELKIVRK) form a coiled coil.

This sequence belongs to the protein kinase superfamily.

In terms of biological role, probable kinase. The sequence is that of Probable kinase 098L from Aedes vexans (Inland floodwater mosquito).